We begin with the raw amino-acid sequence, 1119 residues long: Leucine-rich repeats and immunoglobulin-like domains protein 3 (1119 aa).

Residues 1 to 24 (MSAPSLRARAAGLGLLLCAVLGRA) form the signal peptide. Residues 38–74 (PSGVAAERPCPTTCRCLGDLLDCSRKRLARLPEPLPS) enclose the LRRNT domain. LRR repeat units follow at residues 75 to 96 (WVAR…SMSH), 99 to 120 (SLRE…GPVS), 122 to 142 (NITL…EHLK), 146 to 167 (SLET…FPAL), 168 to 189 (QLKY…YFDN), 193 to 214 (TLLV…MFKL), 216 to 237 (QLQH…TFQG), 240 to 261 (ALKS…AFWG), 264 to 285 (NMEI…WLYG), 288 to 309 (MLQE…AWEF), 312 to 333 (KLSE…SFLG), 336 to 357 (LLNT…AFRG), 360 to 382 (SLKT…NGAF), 387 to 408 (KLRR…AFTG), and 411 to 432 (ALEH…AFSQ). Asn122 and Asn156 each carry an N-linked (GlcNAc...) asparagine glycan. Asn274 carries an N-linked (GlcNAc...) asparagine glycan. 3 N-linked (GlcNAc...) asparagine glycosylation sites follow: Asn442, Asn469, and Asn515. The LRRCT domain maps to 444-495 (SSLLCDCQLKWLPQWVAENNFQSFVNASCAHPQLLKGRSIFAVSPDGFVCDD). Ig-like C2-type domains follow at residues 499 to 598 (PQIT…AKLT), 603 to 692 (PSFT…ATLT), and 697 to 783 (PSFL…VRLS). Intrachain disulfides connect Cys520–Cys581 and Cys624–Cys676. Asn688 and Asn729 each carry an N-linked (GlcNAc...) asparagine glycan. Residues Cys718 and Cys767 are joined by a disulfide bond. The helical transmembrane segment at 810 to 830 (VVIIAVVCCVVGTSLVWVVII) threads the bilayer. Residues Asn905, Asn987, Asn999, and Asn1016 are each glycosylated (N-linked (GlcNAc...) asparagine). A disordered region spans residues 1073–1093 (SSPDLDSGSEEDGKERTDFQE). The segment covering 1083–1093 (EDGKERTDFQE) has biased composition (basic and acidic residues).

In terms of assembly, interacts with EGFR, ERBB2 and ERBB4 (in vitro). In terms of tissue distribution, widely expressed.

The protein localises to the cell membrane. It localises to the cytoplasmic vesicle membrane. In terms of biological role, may play a role in craniofacial and inner ear morphogenesis during embryonic development. May act within the otic vesicle epithelium to control formation of the lateral semicircular canal in the inner ear, possibly by restricting the expression of NTN1. The chain is Leucine-rich repeats and immunoglobulin-like domains protein 3 (LRIG3) from Homo sapiens (Human).